Consider the following 400-residue polypeptide: Formate-dependent phosphoribosylglycinamide formyltransferase (400 aa).

N(1)-(5-phospho-beta-D-ribosyl)glycinamide is bound by residues 22–23 and glutamate 82; that span reads EL. ATP contacts are provided by residues arginine 115, lysine 157, 162-167, 197-200, and glutamate 205; these read SSGKGQ and EGFV. The ATP-grasp domain occupies 120 to 315; that stretch reads RLAAETLGLP…EFELHARAIL (196 aa). 2 residues coordinate Mg(2+): glutamate 274 and glutamate 286. N(1)-(5-phospho-beta-D-ribosyl)glycinamide-binding positions include aspartate 293, lysine 362, and 369–370; that span reads RR.

This sequence belongs to the PurK/PurT family. In terms of assembly, homodimer.

It catalyses the reaction N(1)-(5-phospho-beta-D-ribosyl)glycinamide + formate + ATP = N(2)-formyl-N(1)-(5-phospho-beta-D-ribosyl)glycinamide + ADP + phosphate + H(+). It participates in purine metabolism; IMP biosynthesis via de novo pathway; N(2)-formyl-N(1)-(5-phospho-D-ribosyl)glycinamide from N(1)-(5-phospho-D-ribosyl)glycinamide (formate route): step 1/1. In terms of biological role, involved in the de novo purine biosynthesis. Catalyzes the transfer of formate to 5-phospho-ribosyl-glycinamide (GAR), producing 5-phospho-ribosyl-N-formylglycinamide (FGAR). Formate is provided by PurU via hydrolysis of 10-formyl-tetrahydrofolate. The sequence is that of Formate-dependent phosphoribosylglycinamide formyltransferase from Mycolicibacterium gilvum (strain PYR-GCK) (Mycobacterium gilvum (strain PYR-GCK)).